The chain runs to 413 residues: Cardiolipin synthase B (413 aa).

2 PLD phosphodiesterase domains span residues 108-135 (VFRR…SAEH) and 285-312 (RRRP…DPLS). Active-site residues include His-113, Lys-115, Asp-120, His-290, Lys-292, and Asp-297. The segment at 390–413 (VGPPAQPTMETQDRVETENTGVKP) is disordered.

Belongs to the phospholipase D family. Cardiolipin synthase subfamily. ClsB sub-subfamily.

The protein localises to the cell membrane. It catalyses the reaction 2 a 1,2-diacyl-sn-glycero-3-phospho-(1'-sn-glycerol) = a cardiolipin + glycerol. Catalyzes the phosphatidyl group transfer from one phosphatidylglycerol molecule to another to form cardiolipin (CL) (diphosphatidylglycerol) and glycerol. The protein is Cardiolipin synthase B of Escherichia coli O6:H1 (strain CFT073 / ATCC 700928 / UPEC).